Here is a 232-residue protein sequence, read N- to C-terminus: Very-long-chain (3R)-3-hydroxyacyl-CoA dehydratase 4 (232 aa).

The Cytoplasmic portion of the chain corresponds to 1–19 (MGPSVLPAWLQPRYRKNVY). A helical membrane pass occupies residues 20 to 40 (LFIYYLIQFCGHSWILANMTV). The Lumenal segment spans residues 41–56 (RFFSFGKDSMADTFYA). A helical transmembrane segment spans residues 57–77 (IGLVMRVCQSISLLELLHIYI). Over 78 to 112 (GIESNQLFPRFLQLTERVIILFGVITSQEEVQEKC) the chain is Cytoplasmic. The chain crosses the membrane as a helical span at residues 113-133 (VVCVLFILWNLLDMVRYTYSM). Topologically, residues 134–135 (LS) are lumenal. Residues 136 to 156 (VIGTSYAALTWLSQTLWMPIY) traverse the membrane as a helical segment. Residue Y156 is part of the active site. A topological domain (cytoplasmic) is located at residue P157. A helical transmembrane segment spans residues 158-178 (LCVLAEAFTIYQSLPYFESFG). Residue E163 is part of the active site. Residues 179–189 (TNSTVLPFDLS) lie on the Lumenal side of the membrane. Residues 190-210 (TCFPYVLKLYLMMLFIGMYFT) form a helical membrane-spanning segment. The Cytoplasmic segment spans residues 211–232 (YSHLYTERKDFLRVFSVKQKNV).

The protein belongs to the very long-chain fatty acids dehydratase HACD family. As to quaternary structure, may interact with enzymes of the ELO family (including ELOVL1); with those enzymes that mediate condensation, the first of the four steps of the reaction cycle responsible for fatty acids elongation, may be part of a larger fatty acids elongase complex.

It is found in the endoplasmic reticulum membrane. The enzyme catalyses a very-long-chain (3R)-3-hydroxyacyl-CoA = a very-long-chain (2E)-enoyl-CoA + H2O. The catalysed reaction is (3R)-hydroxyhexadecanoyl-CoA = (2E)-hexadecenoyl-CoA + H2O. It functions in the pathway lipid metabolism; fatty acid biosynthesis. Catalyzes the third of the four reactions of the long-chain fatty acids elongation cycle. This endoplasmic reticulum-bound enzymatic process, allows the addition of two carbons to the chain of long- and very long-chain fatty acids/VLCFAs per cycle. This enzyme catalyzes the dehydration of the 3-hydroxyacyl-CoA intermediate into trans-2,3-enoyl-CoA, within each cycle of fatty acid elongation. Thereby, it participates in the production of VLCFAs of different chain lengths that are involved in multiple biological processes as precursors of membrane lipids and lipid mediators. The protein is Very-long-chain (3R)-3-hydroxyacyl-CoA dehydratase 4 of Mus musculus (Mouse).